The following is a 358-amino-acid chain: Small ribosomal subunit biogenesis GTPase RsgA 2 (358 aa).

The 156-residue stretch at 106 to 261 (AEQLIAANVD…LIDTPGMREI (156 aa)) folds into the CP-type G domain. GTP is bound by residues 151–154 (SKAD) and 203–211 (GSSGVGKST). Positions 284, 289, 291, and 297 each coordinate Zn(2+).

Belongs to the TRAFAC class YlqF/YawG GTPase family. RsgA subfamily. As to quaternary structure, monomer. Associates with 30S ribosomal subunit, binds 16S rRNA. The cofactor is Zn(2+).

Its subcellular location is the cytoplasm. Its function is as follows. One of several proteins that assist in the late maturation steps of the functional core of the 30S ribosomal subunit. Helps release RbfA from mature subunits. May play a role in the assembly of ribosomal proteins into the subunit. Circularly permuted GTPase that catalyzes slow GTP hydrolysis, GTPase activity is stimulated by the 30S ribosomal subunit. This is Small ribosomal subunit biogenesis GTPase RsgA 2 from Vibrio parahaemolyticus serotype O3:K6 (strain RIMD 2210633).